The following is a 249-amino-acid chain: Transmembrane protein 150C (249 aa).

At Met-1 to Trp-9 the chain is on the cytoplasmic side. Residues Met-10 to Ile-30 traverse the membrane as a helical segment. Over Ala-31–Ala-64 the chain is Extracellular. The chain crosses the membrane as a helical span at residues Ser-65–Leu-85. At Arg-86–Pro-97 the chain is on the cytoplasmic side. Residues Trp-98–Gly-118 form a helical membrane-spanning segment. Residues Asn-119–Asn-130 lie on the Extracellular side of the membrane. The helical transmembrane segment at Val-131 to Thr-151 threads the bilayer. Topologically, residues Leu-152–Val-168 are cytoplasmic. The helical transmembrane segment at Ile-169 to Ile-189 threads the bilayer. The Extracellular segment spans residues His-190–Tyr-192. A helical transmembrane segment spans residues Ala-193–Val-213. Over Glu-214 to Val-249 the chain is Cytoplasmic.

The protein belongs to the DRAM/TMEM150 family.

It localises to the cell membrane. It is found in the lysosome membrane. It carries out the reaction Ca(2+)(in) = Ca(2+)(out). The enzyme catalyses Na(+)(in) = Na(+)(out). The catalysed reaction is K(+)(in) = K(+)(out). It catalyses the reaction Mg(2+)(in) = Mg(2+)(out). Its function is as follows. Nonselective cationic channel with high permeability to Ca(2+). Component of a mechanosensitive cation channel. Confers mechanically activated (MA) currents with slow inactivation kinetics. May contribute to proprioception. This chain is Transmembrane protein 150C (TMEM150C), found in Bos taurus (Bovine).